The chain runs to 249 residues: MATDAPEAPVALVTGSSSGIGQTVAQRLAAEGYRVVVNSARSVEDGEKTAAALPDALYVRADVSEEADARRLVDTAVEHYGRLDVLVNNAGRTRAIPHADLAAATPEVWREILGLNVIGTWQTTVAAMPHLARSGNGSVVNVSSIAGSRPAGSSIPYAVSNGGHRAQTRLLANTVGPAVRVNAVAPGLIETPWTQNSDFFAPIAEHVRQTTPLRRTGRPEDVAEAVLGLVRATYTTGQVLLVDGGAHLL.

Residue 12–36 (LVTGSSSGIGQTVAQRLAAEGYRVV) coordinates NAD(+). Residue Ser-144 coordinates substrate. Catalysis depends on Tyr-157, which acts as the Proton acceptor.

The protein belongs to the short-chain dehydrogenases/reductases (SDR) family.

The protein operates within antibiotic biosynthesis; granaticin biosynthesis. This Streptomyces violaceoruber protein is Granaticin polyketide synthase putative ketoacyl reductase 2 (gra-orf6).